Consider the following 428-residue polypeptide: Tyrosine--tRNA ligase (428 aa).

Y41 serves as a coordination point for L-tyrosine. Positions 46–55 (PTADSLHLGH) match the 'HIGH' region motif. Y179 and Q183 together coordinate L-tyrosine. The short motif at 239 to 243 (KFGKT) is the 'KMSKS' region element. K242 is a binding site for ATP. The S4 RNA-binding domain maps to 361–418 (ADLMQALVDSELQPSRGQARKTIASNAVTINGEKQSDPEYFFQDSDILFGRYTLLRRG).

Belongs to the class-I aminoacyl-tRNA synthetase family. TyrS type 1 subfamily. As to quaternary structure, homodimer.

Its subcellular location is the cytoplasm. It catalyses the reaction tRNA(Tyr) + L-tyrosine + ATP = L-tyrosyl-tRNA(Tyr) + AMP + diphosphate + H(+). Its function is as follows. Catalyzes the attachment of tyrosine to tRNA(Tyr) in a two-step reaction: tyrosine is first activated by ATP to form Tyr-AMP and then transferred to the acceptor end of tRNA(Tyr). This Citrobacter koseri (strain ATCC BAA-895 / CDC 4225-83 / SGSC4696) protein is Tyrosine--tRNA ligase.